Here is a 254-residue protein sequence, read N- to C-terminus: Phosphoribosylaminoimidazole-succinocarboxamide synthase (254 aa).

It belongs to the SAICAR synthetase family.

It catalyses the reaction 5-amino-1-(5-phospho-D-ribosyl)imidazole-4-carboxylate + L-aspartate + ATP = (2S)-2-[5-amino-1-(5-phospho-beta-D-ribosyl)imidazole-4-carboxamido]succinate + ADP + phosphate + 2 H(+). It participates in purine metabolism; IMP biosynthesis via de novo pathway; 5-amino-1-(5-phospho-D-ribosyl)imidazole-4-carboxamide from 5-amino-1-(5-phospho-D-ribosyl)imidazole-4-carboxylate: step 1/2. This is Phosphoribosylaminoimidazole-succinocarboxamide synthase from Rhodospirillum centenum (strain ATCC 51521 / SW).